Reading from the N-terminus, the 157-residue chain is Small ribosomal subunit protein uS7 (157 aa).

The protein belongs to the universal ribosomal protein uS7 family. In terms of assembly, part of the 30S ribosomal subunit. Contacts proteins S9 and S11.

Functionally, one of the primary rRNA binding proteins, it binds directly to 16S rRNA where it nucleates assembly of the head domain of the 30S subunit. Is located at the subunit interface close to the decoding center, probably blocks exit of the E-site tRNA. The polypeptide is Small ribosomal subunit protein uS7 (Chloroflexus aurantiacus (strain ATCC 29366 / DSM 635 / J-10-fl)).